A 130-amino-acid chain; its full sequence is Holo-[acyl-carrier-protein] synthase (130 aa).

Mg(2+) contacts are provided by aspartate 9 and glutamate 58.

Belongs to the P-Pant transferase superfamily. AcpS family. Mg(2+) is required as a cofactor.

The protein resides in the cytoplasm. It carries out the reaction apo-[ACP] + CoA = holo-[ACP] + adenosine 3',5'-bisphosphate + H(+). Transfers the 4'-phosphopantetheine moiety from coenzyme A to a Ser of acyl-carrier-protein. The protein is Holo-[acyl-carrier-protein] synthase of Mycobacterium leprae (strain Br4923).